A 288-amino-acid chain; its full sequence is ATP synthase gamma chain (288 aa).

It belongs to the ATPase gamma chain family. In terms of assembly, F-type ATPases have 2 components, CF(1) - the catalytic core - and CF(0) - the membrane proton channel. CF(1) has five subunits: alpha(3), beta(3), gamma(1), delta(1), epsilon(1). CF(0) has three main subunits: a, b and c.

It localises to the cell inner membrane. Produces ATP from ADP in the presence of a proton gradient across the membrane. The gamma chain is believed to be important in regulating ATPase activity and the flow of protons through the CF(0) complex. This chain is ATP synthase gamma chain, found in Actinobacillus pleuropneumoniae serotype 5b (strain L20).